The following is a 571-amino-acid chain: Proline--tRNA ligase (571 aa).

This sequence belongs to the class-II aminoacyl-tRNA synthetase family. ProS type 1 subfamily. As to quaternary structure, homodimer.

It is found in the cytoplasm. It carries out the reaction tRNA(Pro) + L-proline + ATP = L-prolyl-tRNA(Pro) + AMP + diphosphate. Catalyzes the attachment of proline to tRNA(Pro) in a two-step reaction: proline is first activated by ATP to form Pro-AMP and then transferred to the acceptor end of tRNA(Pro). As ProRS can inadvertently accommodate and process non-cognate amino acids such as alanine and cysteine, to avoid such errors it has two additional distinct editing activities against alanine. One activity is designated as 'pretransfer' editing and involves the tRNA(Pro)-independent hydrolysis of activated Ala-AMP. The other activity is designated 'posttransfer' editing and involves deacylation of mischarged Ala-tRNA(Pro). The misacylated Cys-tRNA(Pro) is not edited by ProRS. The chain is Proline--tRNA ligase from Shewanella frigidimarina (strain NCIMB 400).